The primary structure comprises 480 residues: Aspartyl/glutamyl-tRNA(Asn/Gln) amidotransferase subunit B (480 aa).

Belongs to the GatB/GatE family. GatB subfamily. As to quaternary structure, heterotrimer of A, B and C subunits.

The catalysed reaction is L-glutamyl-tRNA(Gln) + L-glutamine + ATP + H2O = L-glutaminyl-tRNA(Gln) + L-glutamate + ADP + phosphate + H(+). It catalyses the reaction L-aspartyl-tRNA(Asn) + L-glutamine + ATP + H2O = L-asparaginyl-tRNA(Asn) + L-glutamate + ADP + phosphate + 2 H(+). Functionally, allows the formation of correctly charged Asn-tRNA(Asn) or Gln-tRNA(Gln) through the transamidation of misacylated Asp-tRNA(Asn) or Glu-tRNA(Gln) in organisms which lack either or both of asparaginyl-tRNA or glutaminyl-tRNA synthetases. The reaction takes place in the presence of glutamine and ATP through an activated phospho-Asp-tRNA(Asn) or phospho-Glu-tRNA(Gln). The protein is Aspartyl/glutamyl-tRNA(Asn/Gln) amidotransferase subunit B of Streptococcus pneumoniae serotype 2 (strain D39 / NCTC 7466).